We begin with the raw amino-acid sequence, 323 residues long: Estradiol 17 beta-dehydrogenase 5 (323 aa).

Residues glycine 20 to tyrosine 24 and aspartate 50 contribute to the NADP(+) site. The active-site Proton donor is the tyrosine 55. Residue histidine 117 coordinates substrate. Residues serine 166–asparagine 167, glutamine 190, tyrosine 216–serine 221, and lysine 270–asparagine 280 contribute to the NADP(+) site.

The protein belongs to the aldo/keto reductase family. In terms of assembly, monomer. Post-translationally, three forms are detected, probably due to post-translational modifications. As to expression, mainly found in liver. Also expressed weakly in kidney.

Functionally, active toward androgens, estrogens, and xenobiotic substrates. Also exhibits low 20 alpha-HSD activity. Shows a-stereospecificity in hydrogen transfer between cofactors and substrates (A-specific). Preferentially catalyzes the reduction of 4-androstenedione, 5-alpha-androstane-3,17-dione, androsterone and dehydroepiandrosterone to testosterone, dihydrotestosterone, 5-alpha-androstane-3-alpha,17-beta-diol and 5-androstene-3-beta,17-beta-diol, respectively. This is Estradiol 17 beta-dehydrogenase 5 (Akr1c6) from Mus musculus (Mouse).